Here is a 547-residue protein sequence, read N- to C-terminus: Methyl-accepting chemotaxis citrate transducer (547 aa).

Residues 1–5 (MKNIK) are Cytoplasmic-facing. Residues 6 to 29 (VITGVIATLGIFSALLLVTGILFY) traverse the membrane as a helical segment. Over 30–189 (SAVSSDRLNF…ASDQNQSSFT (160 aa)) the chain is Periplasmic. A helical membrane pass occupies residues 190–213 (QMQWTLGIILLIVLIVLAFIWLGL). The Cytoplasmic segment spans residues 214–547 (QRVLLRPLQR…AAEQANWESF (334 aa)). Residues 215-267 (RVLLRPLQRIMAHIQTIADGDLTHEIEAEGRSEMGQLAAGLKTMQQSLIRTVS) form the HAMP domain. In terms of domain architecture, Methyl-accepting transducer spans 272-501 (NADSIYTGAG…ESAAAAAALE (230 aa)). The residue at position 296 (Q296) is a Glutamate methyl ester (Gln). E303 is modified (glutamate methyl ester (Glu)). Glutamate methyl ester (Gln) is present on Q310. Residues 317–336 (QNTDNARQATGLAKTASETA) are disordered. 2 positions are modified to glutamate methyl ester (Glu): E492 and E501. Residues 518–547 (KQPRREASPTTLSKGLTPQPAAEQANWESF) are disordered.

Belongs to the methyl-accepting chemotaxis (MCP) protein family. In terms of processing, methylation level is increased by citrate and decreased by phenol.

The protein localises to the cell inner membrane. Functionally, acts as a receptor for citrate and mediates taxis away from phenol. Also mediates an attractant response to metal-citrate complexes. The chain is Methyl-accepting chemotaxis citrate transducer (tcp) from Salmonella typhimurium (strain LT2 / SGSC1412 / ATCC 700720).